The sequence spans 106 residues: uncharacterized protein (106 aa).

Residues 1–31 (MKKKTKIILSLLAALIVILIVLPVLSPVVFT) form the signal peptide.

This is an uncharacterized protein from Bacillus subtilis (strain 168).